The following is a 361-amino-acid chain: Outer mitochondrial transmembrane helix translocase (361 aa).

Residues 1 to 15 (MVHAETFSRPLSRNE) are Mitochondrial intermembrane-facing. Residues 16–32 (VVGLIFRLTIFGAVTYF) traverse the membrane as a helical segment. At 33–361 (TIKWMVDAID…QNVLTHVCLD (329 aa)) the chain is on the cytoplasmic side. 133–140 (GPPGCGKT) provides a ligand contact to ATP. Residue S322 is modified to Phosphoserine.

It belongs to the AAA ATPase family. MSP1 subfamily. Interacts with GRIA2 and GRIP1 in an ATP-dependent manner. ATAD1-catalyzed ATP hydrolysis disrupts not only its binding to GRIA2 and GRIP1, but also interaction between GRIP1 and GRIA2, leading to AMPAR complex disassembly.

It is found in the mitochondrion outer membrane. It localises to the peroxisome membrane. Its subcellular location is the postsynaptic cell membrane. The enzyme catalyses [protein]-with a C-terminal TM segment(out) + ATP + H2O = [protein]-with a C-terminal TM segment(in) + ADP + phosphate + H(+). Outer mitochondrial translocase required to remove mislocalized tail-anchored transmembrane proteins on mitochondria. Specifically recognizes and binds tail-anchored transmembrane proteins: acts as a dislocase that mediates the ATP-dependent extraction of mistargeted tail-anchored transmembrane proteins from the mitochondrion outer membrane. Also plays a critical role in regulating the surface expression of AMPA receptors (AMPAR), thereby regulating synaptic plasticity and learning and memory. Required for NMDA-stimulated AMPAR internalization and inhibition of GRIA1 and GRIA2 recycling back to the plasma membrane; these activities are ATPase-dependent. This Bos taurus (Bovine) protein is Outer mitochondrial transmembrane helix translocase.